The following is a 152-amino-acid chain: Ribosome maturation factor RimP (152 aa).

The protein belongs to the RimP family.

The protein resides in the cytoplasm. Functionally, required for maturation of 30S ribosomal subunits. The sequence is that of Ribosome maturation factor RimP from Sodalis glossinidius (strain morsitans).